The sequence spans 389 residues: GTPase Obg (389 aa).

In terms of domain architecture, Obg spans 1–159 (MKFVDEAVIR…RSLKLELLLL (159 aa)). The OBG-type G domain occupies 160-333 (ADVGLLGMPN…LALKLLDYIA (174 aa)). GTP is bound by residues 166–173 (GMPNAGKS), 191–195 (FTTLV), 213–216 (DIPG), 283–286 (NKTD), and 314–316 (SAY). 2 residues coordinate Mg(2+): Ser173 and Thr193.

Belongs to the TRAFAC class OBG-HflX-like GTPase superfamily. OBG GTPase family. Monomer. Mg(2+) serves as cofactor.

It is found in the cytoplasm. An essential GTPase which binds GTP, GDP and possibly (p)ppGpp with moderate affinity, with high nucleotide exchange rates and a fairly low GTP hydrolysis rate. Plays a role in control of the cell cycle, stress response, ribosome biogenesis and in those bacteria that undergo differentiation, in morphogenesis control. The chain is GTPase Obg from Shewanella baltica (strain OS223).